The chain runs to 133 residues: Crossover junction endodeoxyribonuclease Hjc (133 aa).

Residue glutamate 12 participates in Mg(2+) binding. Serine 32 is a catalytic residue. Mg(2+) is bound by residues aspartate 36 and glutamate 49.

Belongs to the Holliday junction resolvase Hjc family. In terms of assembly, homodimer. Mg(2+) is required as a cofactor.

The enzyme catalyses Endonucleolytic cleavage at a junction such as a reciprocal single-stranded crossover between two homologous DNA duplexes (Holliday junction).. Functionally, a structure-specific endonuclease that resolves Holliday junction (HJ) intermediates during genetic recombination. Cleaves 4-way DNA junctions introducing paired nicks in opposing strands, leaving a 5'-terminal phosphate and a 3'-terminal hydroxyl group that are subsequently ligated to produce recombinant products. In Methanocaldococcus jannaschii (strain ATCC 43067 / DSM 2661 / JAL-1 / JCM 10045 / NBRC 100440) (Methanococcus jannaschii), this protein is Crossover junction endodeoxyribonuclease Hjc.